The sequence spans 153 residues: Ribonuclease HI (153 aa).

Residues 1–141 (MKSVNIFTDG…CDELAKLGAN (141 aa)) enclose the RNase H type-1 domain. 4 residues coordinate Mg(2+): Asp9, Glu47, Asp69, and Asp133.

Belongs to the RNase H family. Monomer. Mg(2+) serves as cofactor.

The protein localises to the cytoplasm. It catalyses the reaction Endonucleolytic cleavage to 5'-phosphomonoester.. Functionally, endonuclease that specifically degrades the RNA of RNA-DNA hybrids. This Haemophilus ducreyi (strain 35000HP / ATCC 700724) protein is Ribonuclease HI.